We begin with the raw amino-acid sequence, 160 residues long: Ribosome maturation factor RimP (160 aa).

It belongs to the RimP family.

The protein localises to the cytoplasm. Required for maturation of 30S ribosomal subunits. The protein is Ribosome maturation factor RimP of Geobacter sp. (strain M21).